Here is a 128-residue protein sequence, read N- to C-terminus: Glycine cleavage system H protein (128 aa).

The region spanning 23 to 105 is the Lipoyl-binding domain; that stretch reads KVRIGITDFA…YEKAWMIVVE (83 aa). Lys64 is subject to N6-lipoyllysine.

The protein belongs to the GcvH family. The glycine cleavage system is composed of four proteins: P, T, L and H. Requires (R)-lipoate as cofactor.

Functionally, the glycine cleavage system catalyzes the degradation of glycine. The H protein shuttles the methylamine group of glycine from the P protein to the T protein. Is also involved in protein lipoylation via its role as an octanoyl/lipoyl carrier protein intermediate. The protein is Glycine cleavage system H protein of Halalkalibacterium halodurans (strain ATCC BAA-125 / DSM 18197 / FERM 7344 / JCM 9153 / C-125) (Bacillus halodurans).